The following is a 349-amino-acid chain: MIEFDNLTYLHGKPQGTGLLKANPEDFVVVEDLGFEPDGEGEHILVRILKNGCNTRFVADALAKFLKIHAREVSFAGQKDKHAVTEQWLCARVPGKEMPDLSAFQLEGCQVLEYARHKRKLRLGALKGNAFTLVLREVSNRDDVEQRLIDICVKGVPNYFGAQRFGIGGSNLQGALRWAQTNTPVRDRNKRSFWLSAARSALFNQIVAERLKKADVNQVVDGDALQLAGRGSWFVATTEELAELQRRVNDKELMITAALPGSGEWGTQREALAFEQAAVAEETELQTLLVREKVEAARRAMLLYPQQLSWNWWDDVTVEIHFWLPAGSFATSVVRELINTTGDYAHIAE.

Position 27 (Phe-27) interacts with substrate. Catalysis depends on Asp-80, which acts as the Nucleophile. Asn-129 provides a ligand contact to substrate. One can recognise a TRUD domain in the interval 155–303 (GVPNYFGAQR…VEAARRAMLL (149 aa)). Phe-329 lines the substrate pocket.

It belongs to the pseudouridine synthase TruD family.

The catalysed reaction is uridine(13) in tRNA = pseudouridine(13) in tRNA. Functionally, responsible for synthesis of pseudouridine from uracil-13 in transfer RNAs. This is tRNA pseudouridine synthase D from Escherichia coli O45:K1 (strain S88 / ExPEC).